An 81-amino-acid chain; its full sequence is Sulfur carrier protein TusA (81 aa).

The active-site Cysteine persulfide intermediate is Cys19.

This sequence belongs to the sulfur carrier protein TusA family. In terms of assembly, interacts with IscS.

The protein resides in the cytoplasm. It functions in the pathway tRNA modification. Sulfur carrier protein involved in sulfur trafficking in the cell. Part of a sulfur-relay system required for 2-thiolation during synthesis of 2-thiouridine of the modified wobble base 5-methylaminomethyl-2-thiouridine (mnm(5)s(2)U) in tRNA. Interacts with IscS and stimulates its cysteine desulfurase activity. Accepts an activated sulfur from IscS, which is then transferred to TusD, and thus determines the direction of sulfur flow from IscS to 2-thiouridine formation. Also appears to be involved in sulfur transfer for the biosynthesis of molybdopterin. The protein is Sulfur carrier protein TusA of Escherichia fergusonii (strain ATCC 35469 / DSM 13698 / CCUG 18766 / IAM 14443 / JCM 21226 / LMG 7866 / NBRC 102419 / NCTC 12128 / CDC 0568-73).